Reading from the N-terminus, the 123-residue chain is Small ribosomal subunit protein uS13 (123 aa).

The segment at 92–123 is disordered; sequence HRRGLPVRGQKTKTNARTRKGPKKLVVSRKKK.

Belongs to the universal ribosomal protein uS13 family. In terms of assembly, part of the 30S ribosomal subunit. Forms a loose heterodimer with protein S19. Forms two bridges to the 50S subunit in the 70S ribosome.

Its function is as follows. Located at the top of the head of the 30S subunit, it contacts several helices of the 16S rRNA. In the 70S ribosome it contacts the 23S rRNA (bridge B1a) and protein L5 of the 50S subunit (bridge B1b), connecting the 2 subunits; these bridges are implicated in subunit movement. Contacts the tRNAs in the A and P-sites. The protein is Small ribosomal subunit protein uS13 of Clostridium tetani (strain Massachusetts / E88).